The chain runs to 67 residues: Penaeidin-4c (67 aa).

The N-terminal stretch at 1-19 is a signal peptide; it reads MRLVVCLVFLASFALVCQG. Disulfide bonds link C42-C56, C45-C63, and C57-C64. R66 is modified (arginine amide).

Belongs to the penaeidin family.

The protein localises to the cytoplasmic granule. Its function is as follows. Antibacterial and antifungal activity. Presents chitin-binding activity. This is Penaeidin-4c from Penaeus vannamei (Whiteleg shrimp).